The chain runs to 434 residues: Gamma-glutamyl phosphate reductase (434 aa).

Over residues 1–11 (MTNSNEAQENA) the composition is skewed to polar residues. The disordered stretch occupies residues 1 to 26 (MTNSNEAQENALSPERQAERDEVLAK). Basic and acidic residues predominate over residues 16-25 (RQAERDEVLA).

Belongs to the gamma-glutamyl phosphate reductase family.

The protein localises to the cytoplasm. It catalyses the reaction L-glutamate 5-semialdehyde + phosphate + NADP(+) = L-glutamyl 5-phosphate + NADPH + H(+). It participates in amino-acid biosynthesis; L-proline biosynthesis; L-glutamate 5-semialdehyde from L-glutamate: step 2/2. Its function is as follows. Catalyzes the NADPH-dependent reduction of L-glutamate 5-phosphate into L-glutamate 5-semialdehyde and phosphate. The product spontaneously undergoes cyclization to form 1-pyrroline-5-carboxylate. This is Gamma-glutamyl phosphate reductase from Corynebacterium jeikeium (strain K411).